The following is a 799-amino-acid chain: MAAAHLGMPVPVYMAEREEDLALRKLIDTLKISAGWDLEANRMAGRLYHFVMGRRAPVDTRAYVTTFGDKLEKGVHRFLWDNARDIDDLCKDFQNGPEYERLISRGMLSAKRMYDTYVLRTEEGGGEGAVYESALQMYARMAAFFTCQCFAYPSLRKTVSEVEGGSGRMESGLDFFAYFFKILASQLVSCATPVMRSAGLRQSYLASCFIMNPDMSTEDKTLSAVFRDLSPLLCSKSGVGMNLTNFSSGGKNVQSCLRLINSQVEFCNDKNLRPVSVAAYMELWHEQIEEFLAAKLPENPERCQSIFQGVCVPGLFFRLYEQNPDSQWHLFSPKVGGHLAGLYGDKFDEEYARLVRHGLYSSSLPAKSLMFALISAIIKTGSPYILSKDAINRHHWFETQGNAISYANLCAEVVQQPHEFTSTCNLANVCLPACLRARGEGEGAGAAGEGEGADRLSPLTPDLEFCFDTLRAAVRAAVYMINASILGGVCPTPGVRVMQAERSAGIGVQGLADVFAKLGRGYMDAESALLDARIFEVMYYQAVRASNQLVTVGGAPPHANWKNSKLSRGEFHWESWGVQYDSLFIERQLWEELRESVTKHGTFNSQFIALMPTAGTSQLTGLSESFYPFYANVSSKVSNKEEVMKPNITFLERVSPSDVPLLKYHGGDVSKLPPPLAAKYRNFLTAFDYSPEDQIRRAAARSPFVDQSQSFSFFLKEANVKSASYVKNLILLGHGLGLKTIMYYCRIQKQTSLTALECLQCTESPDSGDGVGGYKGGDEEPRSPEHAQCESPDRCLSCQ.

Residues Thr192, 207–208 (SC), Gly238, 408–412 (NLCAE), and 612–616 (PTAGT) each bind substrate. Cysteines 208 and 424 form a disulfide. Asn408 functions as the Proton acceptor in the catalytic mechanism. Cys410 (cysteine radical intermediate) is an active-site residue. Catalysis depends on Glu412, which acts as the Proton acceptor. The segment at 765-799 (PDSGDGVGGYKGGDEEPRSPEHAQCESPDRCLSCQ) is disordered. Residues 776–793 (GGDEEPRSPEHAQCESPD) are compositionally biased toward basic and acidic residues.

It belongs to the ribonucleoside diphosphate reductase large chain family. In terms of assembly, heterotetramer composed of a homodimer of the large subunit (R1) and a homodimer of the small subunit (R2). Larger multisubunit protein complex are also active, composed of (R1)n(R2)n.

It carries out the reaction a 2'-deoxyribonucleoside 5'-diphosphate + [thioredoxin]-disulfide + H2O = a ribonucleoside 5'-diphosphate + [thioredoxin]-dithiol. Functionally, ribonucleoside-diphosphate reductase holoenzyme provides the precursors necessary for viral DNA synthesis. Allows virus growth in non-dividing cells, as well as reactivation from latency in infected hosts. Catalyzes the biosynthesis of deoxyribonucleotides from the corresponding ribonucleotides. The protein is Ribonucleoside-diphosphate reductase large subunit of Equine herpesvirus 2 (strain 86/87) (EHV-2).